Here is a 491-residue protein sequence, read N- to C-terminus: F-box protein At3g59000 (491 aa).

Residues 1 to 49 enclose the F-box domain; the sequence is MDRVGSLPDELLSHILSFLTTKEAALTSLLSKRWRYLIAFVPNLAFDDI.

Part of a SCF (ASK-cullin-F-box) protein ligase complex. Interacts with ASK4.

The protein localises to the nucleus. It functions in the pathway protein modification; protein ubiquitination. Its function is as follows. Component of SCF(ASK-cullin-F-box) E3 ubiquitin ligase complexes, which may mediate the ubiquitination and subsequent proteasomal degradation of target proteins. The protein is F-box protein At3g59000 of Arabidopsis thaliana (Mouse-ear cress).